A 292-amino-acid polypeptide reads, in one-letter code: NAC domain-containing protein 105 (292 aa).

The region spanning 12–162 (IPPGFRFHPT…GWVVCRAFKK (151 aa)) is the NAC domain. Residues 112–168 (IGMRKTLVFYRGRAPNGQKSDWIIHEYYSLESHQNSPPQEEGWVVCRAFKKRTTIPT) mediate DNA binding. Residues 237–259 (LPQLESPSLPSEITPHSTTFSEN) show a composition bias toward polar residues. Residues 237–269 (LPQLESPSLPSEITPHSTTFSENSSRKDDMSSE) form a disordered region. The span at 260-269 (SSRKDDMSSE) shows a compositional bias: basic and acidic residues.

This sequence belongs to the plant vascular related NAC-domain protein family. As to quaternary structure, interacts with NAC030/VND7. In terms of tissue distribution, detected in root protoxylem and metaxylem poles and in vessels of protoxylems, outermost metaxylems, inner metaxylems, shoots and hypocotyls. Expressed in roots, hypocotyls, cotyledons and leaves. Present in developing xylems. Present in root developing xylems. Specifically expressed in vessels but not in interfascicular fibers in stems.

The protein resides in the nucleus. Transcription activator that binds to the secondary wall NAC binding element (SNBE), 5'-(T/A)NN(C/T)(T/C/G)TNNNNNNNA(A/C)GN(A/C/T)(A/T)-3', in the promoter of target genes. Involved in xylem formation by promoting the expression of secondary wall-associated transcription factors and of genes involved in secondary wall biosynthesis and programmed cell death, genes driven by the secondary wall NAC binding element (SNBE). Triggers thickening of secondary walls. This is NAC domain-containing protein 105 from Arabidopsis thaliana (Mouse-ear cress).